A 391-amino-acid polypeptide reads, in one-letter code: Ribosomal RNA small subunit methyltransferase H (391 aa).

The segment at 1-23 (MDVDVQDDVQGRAGEGAEERAHD) is disordered. Residues 59–61 (GGH), aspartate 78, leucine 112, aspartate 126, and glutamine 133 contribute to the S-adenosyl-L-methionine site. Residues 284 to 391 (SSSSAPPDLP…EPGATVERTP (108 aa)) are disordered. The segment covering 368–380 (RTQEFETHPHLEP) has biased composition (basic and acidic residues).

Belongs to the methyltransferase superfamily. RsmH family.

Its subcellular location is the cytoplasm. The enzyme catalyses cytidine(1402) in 16S rRNA + S-adenosyl-L-methionine = N(4)-methylcytidine(1402) in 16S rRNA + S-adenosyl-L-homocysteine + H(+). Functionally, specifically methylates the N4 position of cytidine in position 1402 (C1402) of 16S rRNA. This chain is Ribosomal RNA small subunit methyltransferase H, found in Kineococcus radiotolerans (strain ATCC BAA-149 / DSM 14245 / SRS30216).